The sequence spans 431 residues: Glycerol-3-phosphate dehydrogenase [NAD(P)+] (431 aa).

The span at 1-19 (MTSANDKSTDTNVDSTQAE) shows a compositional bias: polar residues. A disordered region spans residues 1–25 (MTSANDKSTDTNVDSTQAEQKMAEK). 4 residues coordinate NADPH: S79, F80, R100, and K173. Sn-glycerol 3-phosphate contacts are provided by K173 and G201. A205 provides a ligand contact to NADPH. Sn-glycerol 3-phosphate-binding residues include K256, D309, S319, R320, and N321. The active-site Proton acceptor is K256. R320 provides a ligand contact to NADPH. E346 serves as a coordination point for NADPH.

Belongs to the NAD-dependent glycerol-3-phosphate dehydrogenase family.

Its subcellular location is the cytoplasm. It carries out the reaction sn-glycerol 3-phosphate + NAD(+) = dihydroxyacetone phosphate + NADH + H(+). The catalysed reaction is sn-glycerol 3-phosphate + NADP(+) = dihydroxyacetone phosphate + NADPH + H(+). Its pathway is membrane lipid metabolism; glycerophospholipid metabolism. In terms of biological role, catalyzes the reduction of the glycolytic intermediate dihydroxyacetone phosphate (DHAP) to sn-glycerol 3-phosphate (G3P), the key precursor for phospholipid synthesis. The polypeptide is Glycerol-3-phosphate dehydrogenase [NAD(P)+] (Psychrobacter arcticus (strain DSM 17307 / VKM B-2377 / 273-4)).